We begin with the raw amino-acid sequence, 201 residues long: Probable GTP-binding protein EngB (201 aa).

The region spanning 22–197 (RLPEYAFIGR…LDYIDSINQE (176 aa)) is the EngB-type G domain. GTP is bound by residues 30 to 37 (GRSNVGKS), 57 to 61 (GKTQL), 75 to 78 (DLPG), 142 to 145 (TKAD), and 173 to 178 (VFITSS). Positions 37 and 59 each coordinate Mg(2+).

The protein belongs to the TRAFAC class TrmE-Era-EngA-EngB-Septin-like GTPase superfamily. EngB GTPase family. Mg(2+) is required as a cofactor.

Necessary for normal cell division and for the maintenance of normal septation. In Porphyromonas gingivalis (strain ATCC 33277 / DSM 20709 / CIP 103683 / JCM 12257 / NCTC 11834 / 2561), this protein is Probable GTP-binding protein EngB.